We begin with the raw amino-acid sequence, 115 residues long: MARDVPASTPAGDTPTLTKAELAELLFDSVGLNKREAKDMVEAFFEVIRDALENGESVKLSGFGNFQLRDKPQRPGRNPKTGEAIPIAARRVVTFHASQKLKALVENGAEPDLAR.

The protein belongs to the bacterial histone-like protein family. Heterodimer of an alpha and a beta chain.

Functionally, this protein is one of the two subunits of integration host factor, a specific DNA-binding protein that functions in genetic recombination as well as in transcriptional and translational control. The sequence is that of Integration host factor subunit alpha from Burkholderia pseudomallei (strain K96243).